The following is a 132-amino-acid chain: Small ribosomal subunit protein uS8 (132 aa).

The protein belongs to the universal ribosomal protein uS8 family. In terms of assembly, part of the 30S ribosomal subunit. Contacts proteins S5 and S12.

In terms of biological role, one of the primary rRNA binding proteins, it binds directly to 16S rRNA central domain where it helps coordinate assembly of the platform of the 30S subunit. In Agrobacterium fabrum (strain C58 / ATCC 33970) (Agrobacterium tumefaciens (strain C58)), this protein is Small ribosomal subunit protein uS8.